The following is a 255-amino-acid chain: 5'-nucleotidase SurE (255 aa).

D8, D9, S39, and N95 together coordinate a divalent metal cation.

The protein belongs to the SurE nucleotidase family. The cofactor is a divalent metal cation.

The protein localises to the cytoplasm. It carries out the reaction a ribonucleoside 5'-phosphate + H2O = a ribonucleoside + phosphate. Functionally, nucleotidase that shows phosphatase activity on nucleoside 5'-monophosphates. This is 5'-nucleotidase SurE from Thermosipho africanus (strain TCF52B).